The chain runs to 1338 residues: Fanconi anemia group I protein (1338 aa).

Lysine 525 participates in a covalent cross-link: Glycyl lysine isopeptide (Lys-Gly) (interchain with G-Cter in ubiquitin). Residues serine 558 and serine 561 each carry the phosphoserine modification. Threonine 567 carries the phosphothreonine modification.

It belongs to the Fanconi anemia group I protein family. In terms of assembly, homodimer. Part of a FANCI-FANCD2 heterodimeric complex that binds and scans dsDNA for DNA damage. Interacts with FANCL. Interacts with MTMR15/FAN1. Interacts with POLN. Interacts with UBL5; the interaction promotes FANCI homodimerization. Post-translationally, monoubiquitinated by FANCL during S phase and upon genotoxic stress. Deubiquitinated by USP1 as cells enter G2/M, or once DNA repair is completed. Monoubiquitination requires the FANCA-FANCB-FANCC-FANCE-FANCF-FANCG-FANCM complex. Ubiquitination is required for binding to chromatin, DNA repair, and normal cell cycle progression. Monoubiquitination is stimulated by DNA-binding. Phosphorylated in response to DNA damage by ATM and/or ATR. Phosphorylation of FANCI promotes ubiquitination of FANCD2, which prevents DNA release from the FANCI-FANCD2 complex.

Functionally, plays an essential role in the repair of DNA double-strand breaks by homologous recombination and in the repair of interstrand DNA cross-links (ICLs) by promoting FANCD2 monoubiquitination by FANCL and participating in recruitment to DNA repair sites. The FANCI-FANCD2 complex binds and scans double-stranded DNA (dsDNA) for DNA damage; this complex stalls at DNA junctions between double-stranded DNA and single-stranded DNA. Participates in S phase and G2 phase checkpoint activation upon DNA damage. This chain is Fanconi anemia group I protein, found in Gallus gallus (Chicken).